Reading from the N-terminus, the 234-residue chain is Flagellar L-ring protein (234 aa).

Residues 1–15 (MRYAVICMLLLAASG) form the signal peptide. A lipid anchor (N-palmitoyl cysteine) is attached at Cys16. The S-diacylglycerol cysteine moiety is linked to residue Cys16.

Belongs to the FlgH family. In terms of assembly, the basal body constitutes a major portion of the flagellar organelle and consists of four rings (L,P,S, and M) mounted on a central rod.

The protein localises to the cell outer membrane. The protein resides in the bacterial flagellum basal body. Assembles around the rod to form the L-ring and probably protects the motor/basal body from shearing forces during rotation. The protein is Flagellar L-ring protein of Oleidesulfovibrio alaskensis (strain ATCC BAA-1058 / DSM 17464 / G20) (Desulfovibrio alaskensis).